A 428-amino-acid chain; its full sequence is Cysteine--tRNA ligase (428 aa).

Zn(2+) is bound at residue C23. A 'HIGH' region motif is present at residues 25-35 (PTVYNDLHLGN). Residues C196, H221, and E225 each contribute to the Zn(2+) site. The 'KMSKS' region signature appears at 253–257 (KMSKS). An ATP-binding site is contributed by K256.

Belongs to the class-I aminoacyl-tRNA synthetase family. In terms of assembly, monomer. Requires Zn(2+) as cofactor.

It is found in the cytoplasm. It catalyses the reaction tRNA(Cys) + L-cysteine + ATP = L-cysteinyl-tRNA(Cys) + AMP + diphosphate. The polypeptide is Cysteine--tRNA ligase (cysS) (Mycoplasma genitalium (strain ATCC 33530 / DSM 19775 / NCTC 10195 / G37) (Mycoplasmoides genitalium)).